A 183-amino-acid polypeptide reads, in one-letter code: Capsid protein (183 aa).

The tract at residues 136–183 is disordered; the sequence is NAPILSTLPETTVVRRRGRSPRRRTPSPRRRRSQSPRRRRSQSPASQC. The segment covering 149-176 has biased composition (basic residues); that stretch reads VRRRGRSPRRRTPSPRRRRSQSPRRRRS. A phosphoserine; by host mark is found at Ser-155, Ser-162, and Ser-170. One copy of the 1; half-length repeat lies at 155–161; the sequence is SPRRRTP. Residues 155 to 177 form a 3 X 8 AA repeats of S-P-R-R-R-[PR]-S-Q region; that stretch reads SPRRRTPSPRRRRSQSPRRRRSQ. The Bipartite nuclear localization signal motif lies at 158 to 175; it reads RRTPSPRRRRSQSPRRRR. Repeat copies occupy residues 162 to 169 and 170 to 177. Residues 177–183 form an RNA binding region; the sequence is QSPASQC.

It belongs to the orthohepadnavirus core antigen family. In terms of assembly, homodimerizes, then multimerizes. Interacts with cytosol exposed regions of viral L glycoprotein present in the reticulum-to-Golgi compartment. Interacts with human FLNB. Phosphorylated form interacts with host importin alpha; this interaction depends on the exposure of the NLS, which itself depends upon genome maturation and/or phosphorylation of the capsid protein. Interacts with host NUP153. Post-translationally, phosphorylated by host SRPK1, SRPK2, and maybe protein kinase C or GAPDH. Phosphorylation is critical for pregenomic RNA packaging. Protein kinase C phosphorylation is stimulated by HBx protein and may play a role in transport of the viral genome to the nucleus at the late step during the viral replication cycle.

The protein resides in the virion. Its subcellular location is the host cytoplasm. Functionally, self assembles to form an icosahedral capsid. Most capsids appear to be large particles with an icosahedral symmetry of T=4 and consist of 240 copies of capsid protein, though a fraction forms smaller T=3 particles consisting of 180 capsid proteins. Entering capsids are transported along microtubules to the nucleus. Phosphorylation of the capsid is thought to induce exposure of nuclear localization signal in the C-terminal portion of the capsid protein that allows binding to the nuclear pore complex via the importin (karyopherin-) alpha and beta. Capsids are imported in intact form through the nuclear pore into the nuclear basket, where it probably binds NUP153. Only capsids that contain the mature viral genome can release the viral DNA and capsid protein into the nucleoplasm. Immature capsids get stuck in the basket. Capsids encapsulate the pre-genomic RNA and the P protein. Pre-genomic RNA is reverse-transcribed into DNA while the capsid is still in the cytoplasm. The capsid can then either be directed to the nucleus, providing more genomes for transcription, or bud through the endoplasmic reticulum to provide new virions. This chain is Capsid protein, found in Hylobatidae (gibbons).